The primary structure comprises 91 residues: MSITQERKQELIKNYAINDNDTGSSAVQCAILTERINNLTEHFKSNHKDHTSRRGLLILVGRRRRLLNYIKKKNVSEYLDLISKLGIRKIK.

The protein belongs to the universal ribosomal protein uS15 family. As to quaternary structure, part of the 30S ribosomal subunit. Forms a bridge to the 50S subunit in the 70S ribosome, contacting the 23S rRNA.

Functionally, one of the primary rRNA binding proteins, it binds directly to 16S rRNA where it helps nucleate assembly of the platform of the 30S subunit by binding and bridging several RNA helices of the 16S rRNA. Forms an intersubunit bridge (bridge B4) with the 23S rRNA of the 50S subunit in the ribosome. The polypeptide is Small ribosomal subunit protein uS15 (Rickettsia bellii (strain OSU 85-389)).